Reading from the N-terminus, the 650-residue chain is DNA gyrase subunit B (650 aa).

Basic and acidic residues predominate over residues 400-414 (RRSQEARELTRRKSP). A disordered region spans residues 400 to 422 (RRSQEARELTRRKSPFDSGSLPG). One can recognise a Toprim domain in the interval 435 to 549 (SELYIVEGDS…QGNIYIAQPP (115 aa)). The Mg(2+) site is built by Glu-441, Asp-514, and Asp-516.

It belongs to the type II topoisomerase GyrB family. As to quaternary structure, heterotetramer, composed of two GyrA and two GyrB chains. In the heterotetramer, GyrA contains the active site tyrosine that forms a transient covalent intermediate with DNA, while GyrB binds cofactors and catalyzes ATP hydrolysis. The cofactor is Mg(2+). It depends on Mn(2+) as a cofactor. Ca(2+) serves as cofactor.

Its subcellular location is the cytoplasm. It carries out the reaction ATP-dependent breakage, passage and rejoining of double-stranded DNA.. Its function is as follows. A type II topoisomerase that negatively supercoils closed circular double-stranded (ds) DNA in an ATP-dependent manner to modulate DNA topology and maintain chromosomes in an underwound state. Negative supercoiling favors strand separation, and DNA replication, transcription, recombination and repair, all of which involve strand separation. Also able to catalyze the interconversion of other topological isomers of dsDNA rings, including catenanes and knotted rings. Type II topoisomerases break and join 2 DNA strands simultaneously in an ATP-dependent manner. The protein is DNA gyrase subunit B of Mycoplasma pneumoniae (strain ATCC 29342 / M129 / Subtype 1) (Mycoplasmoides pneumoniae).